Consider the following 161-residue polypeptide: Regulator of ribonuclease activity A (161 aa).

It belongs to the RraA family. Homotrimer. Binds to both RNA-binding sites in the C-terminal region of Rne and to RhlB.

Its subcellular location is the cytoplasm. In terms of biological role, globally modulates RNA abundance by binding to RNase E (Rne) and regulating its endonucleolytic activity. Can modulate Rne action in a substrate-dependent manner by altering the composition of the degradosome. Modulates RNA-binding and helicase activities of the degradosome. This chain is Regulator of ribonuclease activity A, found in Shigella dysenteriae serotype 1 (strain Sd197).